The sequence spans 1102 residues: Putative ISWI chromatin-remodeling complex subunit YPL216W (1102 aa).

A WAC domain is found at 23–131 (ETPWVIKESS…DTVCLKTIQK (109 aa)). The disordered stretch occupies residues 271–301 (ELYTPLTIPPESDVEPADWKETSETSETSET). A DDT domain is found at 375–435 (QFPTERLLVV…FLKTYNSKGS (61 aa)). A coiled-coil region spans residues 673-743 (CNGIRLKLDS…EDIAFLEAKL (71 aa)).

Its subcellular location is the nucleus. Functionally, may be required for the activity of an ISWI chromatin-remodeling complex. In Saccharomyces cerevisiae (strain ATCC 204508 / S288c) (Baker's yeast), this protein is Putative ISWI chromatin-remodeling complex subunit YPL216W.